The primary structure comprises 301 residues: Acetylglutamate kinase (301 aa).

Residues 72-73 (GG), arginine 94, and asparagine 199 contribute to the substrate site.

This sequence belongs to the acetylglutamate kinase family. ArgB subfamily.

It localises to the cytoplasm. It carries out the reaction N-acetyl-L-glutamate + ATP = N-acetyl-L-glutamyl 5-phosphate + ADP. The protein operates within amino-acid biosynthesis; L-arginine biosynthesis; N(2)-acetyl-L-ornithine from L-glutamate: step 2/4. Its function is as follows. Catalyzes the ATP-dependent phosphorylation of N-acetyl-L-glutamate. The sequence is that of Acetylglutamate kinase from Azorhizobium caulinodans (strain ATCC 43989 / DSM 5975 / JCM 20966 / LMG 6465 / NBRC 14845 / NCIMB 13405 / ORS 571).